A 361-amino-acid chain; its full sequence is Phospho-N-acetylmuramoyl-pentapeptide-transferase (361 aa).

Transmembrane regions (helical) follow at residues 25–45, 73–93, 98–118, 139–159, 168–188, 200–220, 237–257, 264–284, 289–309, and 339–359; these read RGIL…PAVI, TMGG…WGDL, VWLV…DDWI, IFGL…AAIT, IALP…IVGF, GLAI…AYAS, AGEL…FLWF, VFMG…IAVI, MVLV…IIQV, and VIVR…ATLK.

The protein belongs to the glycosyltransferase 4 family. MraY subfamily. The cofactor is Mg(2+).

The protein localises to the cell inner membrane. The catalysed reaction is UDP-N-acetyl-alpha-D-muramoyl-L-alanyl-gamma-D-glutamyl-meso-2,6-diaminopimeloyl-D-alanyl-D-alanine + di-trans,octa-cis-undecaprenyl phosphate = di-trans,octa-cis-undecaprenyl diphospho-N-acetyl-alpha-D-muramoyl-L-alanyl-D-glutamyl-meso-2,6-diaminopimeloyl-D-alanyl-D-alanine + UMP. Its pathway is cell wall biogenesis; peptidoglycan biosynthesis. Functionally, catalyzes the initial step of the lipid cycle reactions in the biosynthesis of the cell wall peptidoglycan: transfers peptidoglycan precursor phospho-MurNAc-pentapeptide from UDP-MurNAc-pentapeptide onto the lipid carrier undecaprenyl phosphate, yielding undecaprenyl-pyrophosphoryl-MurNAc-pentapeptide, known as lipid I. The protein is Phospho-N-acetylmuramoyl-pentapeptide-transferase of Xanthomonas oryzae pv. oryzae (strain PXO99A).